The sequence spans 95 residues: Cobalt transport protein CbiN (95 aa).

The next 2 helical transmembrane spans lie at 5 to 25 (HIIL…IYAG) and 67 to 87 (LLFA…IGYY).

This sequence belongs to the CbiN family. As to quaternary structure, forms an energy-coupling factor (ECF) transporter complex composed of an ATP-binding protein (A component, CbiO), a transmembrane protein (T component, CbiQ) and 2 possible substrate-capture proteins (S components, CbiM and CbiN) of unknown stoichimetry.

The protein localises to the cell membrane. It functions in the pathway cofactor biosynthesis; adenosylcobalamin biosynthesis. Functionally, part of the energy-coupling factor (ECF) transporter complex CbiMNOQ involved in cobalt import. In Methanocaldococcus jannaschii (strain ATCC 43067 / DSM 2661 / JAL-1 / JCM 10045 / NBRC 100440) (Methanococcus jannaschii), this protein is Cobalt transport protein CbiN.